The primary structure comprises 831 residues: Leucine--tRNA ligase (831 aa).

The 'HIGH' region motif lies at 35–45 (PYPSGKIHVGH). The short motif at 600–604 (KMSKS) is the 'KMSKS' region element. K603 provides a ligand contact to ATP.

Belongs to the class-I aminoacyl-tRNA synthetase family.

It is found in the cytoplasm. The catalysed reaction is tRNA(Leu) + L-leucine + ATP = L-leucyl-tRNA(Leu) + AMP + diphosphate. This chain is Leucine--tRNA ligase, found in Rickettsia bellii (strain RML369-C).